Reading from the N-terminus, the 351-residue chain is Heme A synthase (351 aa).

8 helical membrane passes run 17-37 (WLIL…ATRL), 103-123 (LIGL…WLGQ), 129-149 (LVGL…MVSS), 164-184 (LMTH…LWLD), 201-221 (AMAL…VAGL), 261-281 (FNHR…AWAF), 289-309 (EFAF…LTLV), and 316-336 (LALV…YTVW). H263 is a binding site for heme. H320 lines the heme pocket.

It belongs to the COX15/CtaA family. Type 2 subfamily. As to quaternary structure, interacts with CtaB. Heme b serves as cofactor.

The protein resides in the cell membrane. It carries out the reaction Fe(II)-heme o + 2 A + H2O = Fe(II)-heme a + 2 AH2. Its pathway is porphyrin-containing compound metabolism; heme A biosynthesis; heme A from heme O: step 1/1. In terms of biological role, catalyzes the conversion of heme O to heme A by two successive hydroxylations of the methyl group at C8. The first hydroxylation forms heme I, the second hydroxylation results in an unstable dihydroxymethyl group, which spontaneously dehydrates, resulting in the formyl group of heme A. This is Heme A synthase from Hyphomonas neptunium (strain ATCC 15444).